The primary structure comprises 459 residues: Argininosuccinate lyase (459 aa).

Belongs to the lyase 1 family. Argininosuccinate lyase subfamily.

Its subcellular location is the cytoplasm. The enzyme catalyses 2-(N(omega)-L-arginino)succinate = fumarate + L-arginine. It participates in amino-acid biosynthesis; L-arginine biosynthesis; L-arginine from L-ornithine and carbamoyl phosphate: step 3/3. This chain is Argininosuccinate lyase, found in Oceanobacillus iheyensis (strain DSM 14371 / CIP 107618 / JCM 11309 / KCTC 3954 / HTE831).